A 333-amino-acid polypeptide reads, in one-letter code: 1,5-anhydro-D-fructose reductase (333 aa).

Residues 9–12 (ASTI), 33–34 (ST), R38, 71–76 (TTNELH), 93–94 (EK), N120, 162–163 (WR), and Y283 contribute to the NADP(+) site.

In terms of assembly, monomer.

It carries out the reaction 1,5-anhydro-D-mannitol + NADP(+) = 1,5-anhydro-D-fructose + NADPH + H(+). Functionally, catalyzes the NADPH-specific reduction of 1,5-anhydro-D-fructose to 1,5-anhydro-D-mannitol. Also shows some activity against structurally related compounds such as 3-keto-1,5-anhydro-D-fructose, D-glucosone and D-xylosone. The enzyme cannot use NADH as cosubstrate. In Ensifer adhaerens (Sinorhizobium morelense), this protein is 1,5-anhydro-D-fructose reductase (afr).